We begin with the raw amino-acid sequence, 151 residues long: Macrodomain Ter protein (151 aa).

It belongs to the MatP family. As to quaternary structure, homodimer.

The protein localises to the cytoplasm. In terms of biological role, required for spatial organization of the terminus region of the chromosome (Ter macrodomain) during the cell cycle. Prevents early segregation of duplicated Ter macrodomains during cell division. Binds specifically to matS, which is a 13 bp signature motif repeated within the Ter macrodomain. The polypeptide is Macrodomain Ter protein (Vibrio atlanticus (strain LGP32) (Vibrio splendidus (strain Mel32))).